Here is a 263-residue protein sequence, read N- to C-terminus: MVQSTVTVNGVKVASTHPQSAHISIHIHQKSALEQLLGAVGSLKKFLSWPQARIHYGQLSLGVTQILLGLVSCALGVCLYFGPWTELCAFGCAFWSGSVAILAGVGTIVHEKRQGKLSGQVSCLLLLACIATAAAATVLGVNSLIRQTSVPYYVEIFSTCNPLQSSMDPGYGTVRYSDDSDWKTERCREYLNMMMNLFLAFCIMLTVVCILEIVVSVASLGLSLRSMYGRSSQALNEEESERKLLDGHPAPASPAKEKIPAIL.

Helical transmembrane passes span 61–81 (LGVT…CLYF), 89–109 (AFGC…GTIV), 121–141 (VSCL…VLGV), and 197–217 (LFLA…VVSV). A phosphoserine mark is found at S231, S240, and S253. The interval 239–263 (ESERKLLDGHPAPASPAKEKIPAIL) is disordered.

This sequence belongs to the TMEM176 family. Ubiquitously expressed with higher expression in lung, liver, kidney and colon. Expressed in cerebellar granule cells.

Its subcellular location is the nucleus membrane. Its function is as follows. May play a role in the process of maturation of dendritic cells. Required for the development of cerebellar granule cells. In Mus musculus (Mouse), this protein is Transmembrane protein 176B (Tmem176b).